A 253-amino-acid chain; its full sequence is 5-oxoprolinase subunit A (253 aa).

It belongs to the LamB/PxpA family. In terms of assembly, forms a complex composed of PxpA, PxpB and PxpC.

It carries out the reaction 5-oxo-L-proline + ATP + 2 H2O = L-glutamate + ADP + phosphate + H(+). Functionally, catalyzes the cleavage of 5-oxoproline to form L-glutamate coupled to the hydrolysis of ATP to ADP and inorganic phosphate. The sequence is that of 5-oxoprolinase subunit A from Bacillus thuringiensis subsp. konkukian (strain 97-27).